Here is a 272-residue protein sequence, read N- to C-terminus: Phosphatidylglycerol--prolipoprotein diacylglyceryl transferase (272 aa).

A run of 4 helical transmembrane segments spans residues 16–36, 62–82, 97–117, and 129–149; these read VGLHLSWYGILFSLGIFLSSF, FALGALLAIIIGARLAYVLFY, IWKGGLSSHGAVISVVIWAAV, and LSVTYICDLCGAVFGCAALLI. Arginine 150 contributes to the a 1,2-diacyl-sn-glycero-3-phospho-(1'-sn-glycerol) binding site. The next 2 helical transmembrane spans lie at 206 to 226 and 246 to 266; these read GVIRLGSGYSAAGALIGVAVI and ILTIGQWLSIPMIFLGVGIIW.

It belongs to the Lgt family.

It localises to the cell inner membrane. The enzyme catalyses L-cysteinyl-[prolipoprotein] + a 1,2-diacyl-sn-glycero-3-phospho-(1'-sn-glycerol) = an S-1,2-diacyl-sn-glyceryl-L-cysteinyl-[prolipoprotein] + sn-glycerol 1-phosphate + H(+). It participates in protein modification; lipoprotein biosynthesis (diacylglyceryl transfer). Functionally, catalyzes the transfer of the diacylglyceryl group from phosphatidylglycerol to the sulfhydryl group of the N-terminal cysteine of a prolipoprotein, the first step in the formation of mature lipoproteins. The polypeptide is Phosphatidylglycerol--prolipoprotein diacylglyceryl transferase (Chlamydia trachomatis serovar D (strain ATCC VR-885 / DSM 19411 / UW-3/Cx)).